Consider the following 153-residue polypeptide: Endoribonuclease YbeY (153 aa).

Residues His-116, His-120, and His-126 each contribute to the Zn(2+) site.

This sequence belongs to the endoribonuclease YbeY family. Zn(2+) serves as cofactor.

Its subcellular location is the cytoplasm. Its function is as follows. Single strand-specific metallo-endoribonuclease involved in late-stage 70S ribosome quality control and in maturation of the 3' terminus of the 16S rRNA. This chain is Endoribonuclease YbeY, found in Clavibacter sepedonicus (Clavibacter michiganensis subsp. sepedonicus).